Consider the following 627-residue polypeptide: Zinc cluster transcription factor acuM (627 aa).

Disordered stretches follow at residues 1–40, 129–148, 155–193, 225–258, 277–305, and 394–416; these read MGCRKSSCPRHHTPKAGTFPPRWFPSAEEPGKKGGQPARP, NGTAQTGTVPVEQPRNGTME, AEGDSSRMESGSKNTASPPVKADNNAAGTHSSPKKRRKV, CHDEPREPSKRARSEHEHSTAEEDGHSNNEFSNA, PDGTVALPPSSVSAVQHNTIPSSSAQNSL, and AQPSQPTQSQPHQNDSVQGPSST. A compositionally biased stretch (polar residues) spans 162–171; the sequence is MESGSKNTAS. The zn(2)-C6 fungal-type DNA-binding region spans 197-225; it reads CVYCRRSHMTCDSERPCTRCIKRNIGHLC. Residues 225 to 251 show a composition bias toward basic and acidic residues; the sequence is CHDEPREPSKRARSEHEHSTAEEDGHS. The segment covering 286-305 has biased composition (polar residues); sequence SSVSAVQHNTIPSSSAQNSL. The segment covering 394-403 has biased composition (low complexity); sequence AQPSQPTQSQ. Over residues 404-416 the composition is skewed to polar residues; it reads PHQNDSVQGPSST.

The protein resides in the nucleus. Transcription factor that governs genes involved in reductive and siderophore-mediated iron acquisition, and carbon metabolism. Suppresses the expression of sreA and induces hapX to stimulate expression of genes involved in both reductive iron assimilation and siderophore-mediated iron uptake which is essential for the maximal virulence. Also regulates genes involved in gluconeogenesis. This chain is Zinc cluster transcription factor acuM, found in Aspergillus fumigatus (strain ATCC MYA-4609 / CBS 101355 / FGSC A1100 / Af293) (Neosartorya fumigata).